Consider the following 250-residue polypeptide: MADS-box transcription factor 47 (250 aa).

The segment covering 1-10 (MAGGGGGGGR) has biased composition (gly residues). Disordered regions lie at residues 1–20 (MAGGGGGGGRGEGEGRAATG) and 196–250 (SRME…FSSK). Over residues 11 to 20 (GEGEGRAATG) the composition is skewed to basic and acidic residues. The 61-residue stretch at 20–80 (GKRERIAIRR…GKLFQFASTS (61 aa)) folds into the MADS-box domain. A K-box domain is found at 106 to 198 (QGEDSSTCAR…QLQVSRMSRM (93 aa)). A compositionally biased stretch (polar residues) spans 214 to 224 (GQSSESVTNAS).

As to quaternary structure, may interact with MADS18. As to expression, expressed in roots, shoots and developing panicles. Expressed in mature stems and leaves, flowering panicles, developing seeds, and mature seeds.

Its subcellular location is the nucleus. Functionally, transcription factor that modulates expressions of multiple genes involved in cell signaling and gene transcription. Plays a negative regulatory role in brassinosteroid signaling. The protein is MADS-box transcription factor 47 of Oryza sativa subsp. japonica (Rice).